We begin with the raw amino-acid sequence, 810 residues long: Soluble starch synthase 2-3, chloroplastic/amyloplastic (810 aa).

The transit peptide at 1-16 (MSSAVVASSTTFLVAL) directs the protein to the chloroplast. Disordered regions lie at residues 43-265 (GRAG…PIPA) and 281-313 (EPDA…SGPL). Residues 63–83 (RDAGVVRRADDGENEAAVERA) show a composition bias toward basic and acidic residues. The segment covering 84–93 (GEDDEEEEEF) has biased composition (acidic residues). Over residues 102–116 (RSRRGGVGKVLKRRG) the composition is skewed to basic residues. Residues 129–148 (DAARVRGAAAPAPAPTQDAA) show a composition bias toward low complexity. The segment covering 281–310 (EPDAAEDGDDDDDWADSDASDSEIDQDDDS) has biased composition (acidic residues). Position 333 (K333) interacts with ADP-alpha-D-glucose.

Belongs to the glycosyltransferase 1 family. Bacterial/plant glycogen synthase subfamily. As to expression, expressed most exclusively in endosperm.

Its subcellular location is the plastid. The protein resides in the amyloplast. It localises to the chloroplast. It catalyses the reaction [(1-&gt;4)-alpha-D-glucosyl](n) + ADP-alpha-D-glucose = [(1-&gt;4)-alpha-D-glucosyl](n+1) + ADP + H(+). It participates in glycan biosynthesis; starch biosynthesis. Its function is as follows. Plays an important role during endosperm starch synthesis. Determines the type of amylopectin structure of starch grain. Synthesizes long B1 amylopectin chains by elongating short A and B1 chains, independently of the other soluble starch synthases. Barely active in japonica subspecies. The protein is Soluble starch synthase 2-3, chloroplastic/amyloplastic (SSII-3) of Oryza sativa subsp. indica (Rice).